Consider the following 435-residue polypeptide: C4-dicarboxylate transport protein (435 aa).

9 helical membrane passes run 4-24, 44-64, 76-96, 142-162, 184-204, 222-242, 289-309, 326-346, and 352-372; these read SLFK…ILLG, LIKM…IAGM, VALL…LIIV, IGAF…LFGF, VIFG…FGAM, LIIC…GTIA, VVGL…SIYL, IFHQ…VAGV, and IVLA…LALI.

This sequence belongs to the dicarboxylate/amino acid:cation symporter (DAACS) (TC 2.A.23) family.

The protein resides in the cell inner membrane. Functionally, responsible for the transport of dicarboxylates such as succinate, fumarate, and malate from the periplasm across the membrane. The protein is C4-dicarboxylate transport protein of Salmonella paratyphi A (strain ATCC 9150 / SARB42).